The chain runs to 248 residues: Tetraspanin-16 (248 aa).

At 1-7 the chain is on the cytoplasmic side; it reads MSEIRTG. Residues 8–28 traverse the membrane as a helical segment; the sequence is FLTMATIILICIGLTMTGTGL. The Extracellular portion of the chain corresponds to 29-44; it reads YYRKTVSKCIRETDGS. A helical transmembrane segment spans residues 45-65; that stretch reads FVVIGLLLLVIPQFALYAICC. The Cytoplasmic portion of the chain corresponds to 66-69; it reads HSKR. A helical membrane pass occupies residues 70–90; sequence MFTIYIYAMIFVSIVLGGYSL. Topologically, residues 91-208 are extracellular; sequence KCFIYNTTFG…MSILKAIVHQ (118 aa). Residues Asn96 and Asn141 are each glycosylated (N-linked (GlcNAc...) asparagine). The chain crosses the membrane as a helical span at residues 209–229; it reads WKYLSMFSYPALFLVCLSLAI. Residues 230–248 lie on the Cytoplasmic side of the membrane; it reads SRSIMDTFDEPDDYRGYYS.

The protein belongs to the tetraspanin (TM4SF) family.

It is found in the membrane. Its function is as follows. May be involved in the regulation of cell differentiation. This is Tetraspanin-16 (TET16) from Arabidopsis thaliana (Mouse-ear cress).